The sequence spans 340 residues: L-threonine 3-dehydrogenase (340 aa).

Cys-38 is a binding site for Zn(2+). Active-site charge relay system residues include Thr-40 and His-43. His-63, Glu-64, Cys-93, Cys-96, Cys-99, and Cys-107 together coordinate Zn(2+). Residues Ile-175, Asp-195, Arg-200, 261 to 263 (LGI), and 285 to 286 (IY) contribute to the NAD(+) site.

It belongs to the zinc-containing alcohol dehydrogenase family. In terms of assembly, homotetramer. Zn(2+) is required as a cofactor.

Its subcellular location is the cytoplasm. The enzyme catalyses L-threonine + NAD(+) = (2S)-2-amino-3-oxobutanoate + NADH + H(+). It participates in amino-acid degradation; L-threonine degradation via oxydo-reductase pathway; glycine from L-threonine: step 1/2. Its function is as follows. Catalyzes the NAD(+)-dependent oxidation of L-threonine to 2-amino-3-ketobutyrate. This chain is L-threonine 3-dehydrogenase, found in Xanthomonas oryzae pv. oryzae (strain MAFF 311018).